The primary structure comprises 185 residues: Avirulence protein ATR39-1 (185 aa).

The N-terminal stretch at 1 to 20 (MVKCTPLLALTVIVSAGSDA) is a signal peptide. A RxLR-dEER motif is present at residues 49–66 (RVLRASDVPDEVAAGESR).

It belongs to the RxLR effector family.

It is found in the secreted. It localises to the host cell. Secreted effector that acts as an elicitor of hypersensitive response (HR) specifically on plants carrying defense protein RPP39. The allele ATR39-1 is recognized by RPP39, whereas the ATR39-2 allele is not recognized. This Hyaloperonospora arabidopsidis (strain Emoy2) (Downy mildew agent) protein is Avirulence protein ATR39-1.